The chain runs to 184 residues: Glutathione-regulated potassium-efflux system ancillary protein KefG (184 aa).

The protein belongs to the NAD(P)H dehydrogenase (quinone) family. KefG subfamily. Interacts with KefB.

The protein localises to the cell inner membrane. It carries out the reaction a quinone + NADH + H(+) = a quinol + NAD(+). It catalyses the reaction a quinone + NADPH + H(+) = a quinol + NADP(+). In terms of biological role, regulatory subunit of a potassium efflux system that confers protection against electrophiles. Required for full activity of KefB. The chain is Glutathione-regulated potassium-efflux system ancillary protein KefG from Cronobacter sakazakii (strain ATCC BAA-894) (Enterobacter sakazakii).